We begin with the raw amino-acid sequence, 79 residues long: Small ribosomal subunit protein bS16 (79 aa).

The protein belongs to the bacterial ribosomal protein bS16 family.

This chain is Small ribosomal subunit protein bS16, found in Solidesulfovibrio magneticus (strain ATCC 700980 / DSM 13731 / RS-1) (Desulfovibrio magneticus).